A 190-amino-acid polypeptide reads, in one-letter code: Crossover junction endodeoxyribonuclease RuvC (190 aa).

Catalysis depends on residues Asp-8, Glu-67, and Asp-139. Asp-8, Glu-67, and Asp-139 together coordinate Mg(2+).

It belongs to the RuvC family. In terms of assembly, homodimer which binds Holliday junction (HJ) DNA. The HJ becomes 2-fold symmetrical on binding to RuvC with unstacked arms; it has a different conformation from HJ DNA in complex with RuvA. In the full resolvosome a probable DNA-RuvA(4)-RuvB(12)-RuvC(2) complex forms which resolves the HJ. Mg(2+) is required as a cofactor.

Its subcellular location is the cytoplasm. The catalysed reaction is Endonucleolytic cleavage at a junction such as a reciprocal single-stranded crossover between two homologous DNA duplexes (Holliday junction).. In terms of biological role, the RuvA-RuvB-RuvC complex processes Holliday junction (HJ) DNA during genetic recombination and DNA repair. Endonuclease that resolves HJ intermediates. Cleaves cruciform DNA by making single-stranded nicks across the HJ at symmetrical positions within the homologous arms, yielding a 5'-phosphate and a 3'-hydroxyl group; requires a central core of homology in the junction. The consensus cleavage sequence is 5'-(A/T)TT(C/G)-3'. Cleavage occurs on the 3'-side of the TT dinucleotide at the point of strand exchange. HJ branch migration catalyzed by RuvA-RuvB allows RuvC to scan DNA until it finds its consensus sequence, where it cleaves and resolves the cruciform DNA. The sequence is that of Crossover junction endodeoxyribonuclease RuvC from Haemophilus influenzae (strain 86-028NP).